The primary structure comprises 367 residues: Putative F-box protein At3g21130 (367 aa).

The region spanning 4-50 (KRNTVYLSEDLIVEILSRVSAVSLARLRTTSKRWNALVKDERLAKKH) is the F-box domain.

The protein is Putative F-box protein At3g21130 of Arabidopsis thaliana (Mouse-ear cress).